Here is a 712-residue protein sequence, read N- to C-terminus: Polyphosphate kinase (712 aa).

Asn-49 is a binding site for ATP. Positions 398 and 428 each coordinate Mg(2+). His-458 serves as the catalytic Phosphohistidine intermediate. The ATP site is built by Tyr-491, Arg-587, and His-615.

The protein belongs to the polyphosphate kinase 1 (PPK1) family. Mg(2+) is required as a cofactor. Post-translationally, an intermediate of this reaction is the autophosphorylated ppk in which a phosphate is covalently linked to a histidine residue through a N-P bond.

The catalysed reaction is [phosphate](n) + ATP = [phosphate](n+1) + ADP. Its function is as follows. Catalyzes the reversible transfer of the terminal phosphate of ATP to form a long-chain polyphosphate (polyP). The polypeptide is Polyphosphate kinase (Parasynechococcus marenigrum (strain WH8102)).